The sequence spans 261 residues: Cytochrome c oxidase subunit 3 (261 aa).

The Mitochondrial matrix segment spans residues 1–15; sequence MTHQTHAYHMVNPSP. A helical transmembrane segment spans residues 16-34; sequence WPLTGALSALLMTSGLIMW. Residues 35–40 lie on the Mitochondrial intermembrane side of the membrane; sequence FHFNSM. The chain crosses the membrane as a helical span at residues 41-66; it reads TLLMLGLTTNMLTMYQWWRDIIREST. At 67–72 the chain is on the mitochondrial matrix side; the sequence is FQGHHT. A helical transmembrane segment spans residues 73 to 105; the sequence is SAVQKGLRYGMILFIISEVLFFTGFFWAFYHSS. The Mitochondrial intermembrane portion of the chain corresponds to 106 to 128; the sequence is LAPTPELGGCWPPTGIHPLNPLE. Residues 129–152 traverse the membrane as a helical segment; that stretch reads VPLLNTSVLLASGVSITWAHHSLM. The Mitochondrial matrix segment spans residues 153-155; it reads EGN. Residues 156 to 183 form a helical membrane-spanning segment; the sequence is RNHMLQALFITIALGVYFTLLQASEYYE. The Mitochondrial intermembrane portion of the chain corresponds to 184 to 190; the sequence is APFTISD. Residues 191–223 traverse the membrane as a helical segment; sequence GVYGSTFFVATGFHGLHVIIGSTFLIVCFFRQL. Residues 224–232 are Mitochondrial matrix-facing; sequence KFHFTSTHH. The helical transmembrane segment at 233–256 threads the bilayer; sequence FGFEAAAWYWHFVDVVWLFLYVSI. At 257–261 the chain is on the mitochondrial intermembrane side; it reads YWWGS.

This sequence belongs to the cytochrome c oxidase subunit 3 family. In terms of assembly, component of the cytochrome c oxidase (complex IV, CIV), a multisubunit enzyme composed of 14 subunits. The complex is composed of a catalytic core of 3 subunits MT-CO1, MT-CO2 and MT-CO3, encoded in the mitochondrial DNA, and 11 supernumerary subunits COX4I, COX5A, COX5B, COX6A, COX6B, COX6C, COX7A, COX7B, COX7C, COX8 and NDUFA4, which are encoded in the nuclear genome. The complex exists as a monomer or a dimer and forms supercomplexes (SCs) in the inner mitochondrial membrane with NADH-ubiquinone oxidoreductase (complex I, CI) and ubiquinol-cytochrome c oxidoreductase (cytochrome b-c1 complex, complex III, CIII), resulting in different assemblies (supercomplex SCI(1)III(2)IV(1) and megacomplex MCI(2)III(2)IV(2)).

It is found in the mitochondrion inner membrane. It catalyses the reaction 4 Fe(II)-[cytochrome c] + O2 + 8 H(+)(in) = 4 Fe(III)-[cytochrome c] + 2 H2O + 4 H(+)(out). Its function is as follows. Component of the cytochrome c oxidase, the last enzyme in the mitochondrial electron transport chain which drives oxidative phosphorylation. The respiratory chain contains 3 multisubunit complexes succinate dehydrogenase (complex II, CII), ubiquinol-cytochrome c oxidoreductase (cytochrome b-c1 complex, complex III, CIII) and cytochrome c oxidase (complex IV, CIV), that cooperate to transfer electrons derived from NADH and succinate to molecular oxygen, creating an electrochemical gradient over the inner membrane that drives transmembrane transport and the ATP synthase. Cytochrome c oxidase is the component of the respiratory chain that catalyzes the reduction of oxygen to water. Electrons originating from reduced cytochrome c in the intermembrane space (IMS) are transferred via the dinuclear copper A center (CU(A)) of subunit 2 and heme A of subunit 1 to the active site in subunit 1, a binuclear center (BNC) formed by heme A3 and copper B (CU(B)). The BNC reduces molecular oxygen to 2 water molecules using 4 electrons from cytochrome c in the IMS and 4 protons from the mitochondrial matrix. The protein is Cytochrome c oxidase subunit 3 (MT-CO3) of Damaliscus lunatus (Tsessebe).